The primary structure comprises 245 residues: Thiopurine S-methyltransferase (245 aa).

S14 is subject to Phosphoserine. An S-adenosyl-L-methionine-binding site is contributed by W29–F40. F40 provides a ligand contact to substrate. K58 bears the N6-acetyllysine mark. S-adenosyl-L-methionine contacts are provided by L69, E90, and R152.

Belongs to the class I-like SAM-binding methyltransferase superfamily. TPMT family. As to quaternary structure, monomer.

It localises to the cytoplasm. It carries out the reaction S-adenosyl-L-methionine + a thiopurine = S-adenosyl-L-homocysteine + a thiopurine S-methylether.. This chain is Thiopurine S-methyltransferase (TPMT), found in Panthera tigris (Tiger).